A 258-amino-acid chain; its full sequence is Short-chain dehydrogenase reductase 3c (258 aa).

An NAD(+)-binding site is contributed by 12–36 (IITGGASGIGADAARLFTDHGAKVV). Ser144 contacts substrate. Tyr156 (proton acceptor) is an active-site residue.

It belongs to the short-chain dehydrogenases/reductases (SDR) family.

The sequence is that of Short-chain dehydrogenase reductase 3c (SDR3c) from Arabidopsis thaliana (Mouse-ear cress).